The sequence spans 441 residues: Apolipoprotein N-acyltransferase (441 aa).

Helical transmembrane passes span 23–43, 45–65, 75–95, 97–117, 133–153, 156–176, and 178–198; these read IIFK…SIYL, FFEN…GLVL, YFWI…LSSI, FNLN…YGLL, GIFC…WGIF, YGFF…AYFI, and EGYI…FSGF. The CN hydrolase domain maps to 215–441; it reads INTNISQDQK…LSKEIFNDKK (227 aa). The active-site Proton acceptor is glutamate 256. Lysine 310 is an active-site residue. The active-site Nucleophile is cysteine 359.

This sequence belongs to the CN hydrolase family. Apolipoprotein N-acyltransferase subfamily.

The protein localises to the cell inner membrane. It carries out the reaction N-terminal S-1,2-diacyl-sn-glyceryl-L-cysteinyl-[lipoprotein] + a glycerophospholipid = N-acyl-S-1,2-diacyl-sn-glyceryl-L-cysteinyl-[lipoprotein] + a 2-acyl-sn-glycero-3-phospholipid + H(+). It participates in protein modification; lipoprotein biosynthesis (N-acyl transfer). In terms of biological role, catalyzes the phospholipid dependent N-acylation of the N-terminal cysteine of apolipoprotein, the last step in lipoprotein maturation. This is Apolipoprotein N-acyltransferase from Campylobacter jejuni subsp. jejuni serotype O:2 (strain ATCC 700819 / NCTC 11168).